Consider the following 425-residue polypeptide: MAPITTSRVEFDEIPTVVGIFSAFGLVFTVSLFAWICCQRRSAKSNKTPPYKFVHVLKGVDIYPENLSSKKKFGGDDKSEVKGKAALPNLSLHLDLEKRDLNGNFPKANPKAGSSSDLENVTPKLFTETEKEANSPESLKSSTSLTSEEKQEKLGTLFLSLEYNFEKKAFVVNIKEAQGLPAMDEQSMTSDPYIKMTILPEKKHRVKTRVLRKTLDPVFDETFTFYGIPYPHIQELSLHFTVLSFDRFSRDDVIGEVLIPLSGIELSDGKMLMTREIIKRNAKKSSGRGELLVSLCYQSTTNTLTVVVLKARHLPKSDVSGLSDPYVKVNLYHAKKRISKKKTHVKKCTPNAVFNELFVFDIPCESLEEISVEFLVLDSERGSRNEVIGRLVLGATAEGSGGGHWKEICDFPRRQIAKWHMLCDG.

At 1–16 (MAPITTSRVEFDEIPT) the chain is on the vesicular side. Residues 17–37 (VVGIFSAFGLVFTVSLFAWIC) form a helical membrane-spanning segment. The Cytoplasmic segment spans residues 38-425 (CQRRSAKSNK…IAKWHMLCDG (388 aa)). Residues 127–147 (TETEKEANSPESLKSSTSLTS) form a disordered region. Phosphoserine; by MAPK8 is present on serine 135. The segment covering 137–146 (ESLKSSTSLT) has biased composition (low complexity). 2 C2 domains span residues 153 to 274 (KLGT…MLMT) and 287 to 420 (GRGE…AKWH). The Ca(2+) site is built by aspartate 246, serine 249, and aspartate 252.

Belongs to the synaptotagmin family. In terms of assembly, interacts with KIF1A; the interaction increases in presence of calcium and decreases when SYT4 is phosphorylated at Ser-135. Ca(2+) serves as cofactor. Post-translationally, phosphorylation at Ser-135 by MAPK8/JNK1 reduces interaction with KIF1A and neuronal dense core vesicles mobility. As to expression, expressed in many regions of the nervous system but is undetectable in extra neural tissues.

The protein localises to the cytoplasmic vesicle. Its subcellular location is the secretory vesicle. It localises to the neuronal dense core vesicle membrane. Functionally, synaptotagmin family member which does not bind Ca(2+). Plays a role in dendrite formation by melanocytes. Synaptotagmin family member which does not bind Ca(2+). Involved in neuronal dense core vesicles (DCVs) mobility through its interaction with KIF1A. Upon increased neuronal activity, phosphorylation by MAPK8/JNK1 destabilizes the interaction with KIF1A and captures DCVs to synapses. Plays a role in dendrite formation by melanocytes. In Mus musculus (Mouse), this protein is Synaptotagmin-4 (Syt4).